Here is a 373-residue protein sequence, read N- to C-terminus: Glutamate 5-kinase (373 aa).

Lys-15 serves as a coordination point for ATP. Substrate-binding residues include Ser-55, Asp-142, and Asn-154. Residues 174–175 (TD) and 216–222 (TGGMATK) each bind ATP. Residues 281 to 359 (AGSIVVDAGA…SEIEGILGFR (79 aa)) form the PUA domain.

Belongs to the glutamate 5-kinase family.

The protein resides in the cytoplasm. It carries out the reaction L-glutamate + ATP = L-glutamyl 5-phosphate + ADP. Its pathway is amino-acid biosynthesis; L-proline biosynthesis; L-glutamate 5-semialdehyde from L-glutamate: step 1/2. Functionally, catalyzes the transfer of a phosphate group to glutamate to form L-glutamate 5-phosphate. The chain is Glutamate 5-kinase from Citrifermentans bemidjiense (strain ATCC BAA-1014 / DSM 16622 / JCM 12645 / Bem) (Geobacter bemidjiensis).